A 344-amino-acid chain; its full sequence is uncharacterized protein (344 aa).

The N-terminal stretch at Met1–Ser19 is a signal peptide. Positions Ser323–Leu344 are cleaved as a propeptide — removed in mature form.

The protein localises to the cell membrane. This is an uncharacterized protein from Dictyostelium discoideum (Social amoeba).